We begin with the raw amino-acid sequence, 547 residues long: MKLKATLTLAAATLVLAACDQSSSANKSTAQTEAKSSSNNTFVYCTAKAPLGFSPALIIEGTSYNASSQQVYNRLVEFKKGSTDIEPALAESWEISDDGLSYTFHLRKGVKFHTTKEFTPTRDFNADDVVFSFQRQLDPNHPYHNVSKGTYPYFKAMKFPELLKSVEKVDDNTIRITLNKTDATFLASLGMDFISIYSAEYADSMLKAGKPETLDSRPVGTGPFVFVDYKTDQAIQYVAHENYWKGRTPLDRLVISIVPDATTRYAKLQAGTCDLILFPNVADLAKMKTDPKVQLLEQKGLNVAYIAFNTEKAPFDNVKVRQALNYAVDKKAIIEAVYQGAGTSAKNPLPPTIWSYNDEIQDYPYDPEKAKQLLAEAGYPNGFETDFWIQPVIRASNPNPKRMAELIMADWAKIGVKTNPVTYEWADYRKRAKEGELTAGIFGWSGDNGDPDNFLSPLLGSSNIGNSNMARFNNSEFDALLNEAIGLTNKEERAKLYKQAQVIVHNQAPWIPVAHSVGFAPLSPRVKGYVQSPFGYDAFYGVSVDGK.

The signal sequence occupies residues 1–18 (MKLKATLTLAAATLVLAA). Residue cysteine 19 is the site of N-palmitoyl cysteine attachment. Cysteine 19 carries S-diacylglycerol cysteine lipidation.

It belongs to the bacterial solute-binding protein 5 family.

It is found in the cell inner membrane. Important role in heme acquisition or metabolism. In Haemophilus influenzae (strain ATCC 51907 / DSM 11121 / KW20 / Rd), this protein is Heme-binding protein A (hbpA).